The primary structure comprises 289 residues: ATP phosphoribosyltransferase (289 aa).

It belongs to the ATP phosphoribosyltransferase family. Long subfamily. It depends on Mg(2+) as a cofactor.

The protein localises to the cytoplasm. The catalysed reaction is 1-(5-phospho-beta-D-ribosyl)-ATP + diphosphate = 5-phospho-alpha-D-ribose 1-diphosphate + ATP. The protein operates within amino-acid biosynthesis; L-histidine biosynthesis; L-histidine from 5-phospho-alpha-D-ribose 1-diphosphate: step 1/9. Feedback inhibited by histidine. In terms of biological role, catalyzes the condensation of ATP and 5-phosphoribose 1-diphosphate to form N'-(5'-phosphoribosyl)-ATP (PR-ATP). Has a crucial role in the pathway because the rate of histidine biosynthesis seems to be controlled primarily by regulation of HisG enzymatic activity. This chain is ATP phosphoribosyltransferase, found in Koribacter versatilis (strain Ellin345).